Consider the following 246-residue polypeptide: Serine protease 1 (246 aa).

The N-terminal stretch at 1–17 (MKTFIFLALLGAAVAFP) is a signal peptide. Positions 18–23 (VDDDDK) are cleaved as a propeptide — activation peptide. One can recognise a Peptidase S1 domain in the interval 24 to 244 (IVGGYTCGAN…YVSWIKQTIA (221 aa)). 6 disulfide bridges follow: Cys-30-Cys-160, Cys-48-Cys-64, Cys-132-Cys-233, Cys-139-Cys-206, Cys-171-Cys-185, and Cys-196-Cys-220. His-63 functions as the Charge relay system in the catalytic mechanism. 4 residues coordinate Ca(2+): Glu-75, Asn-77, Val-80, and Glu-85. Catalysis depends on Asp-107, which acts as the Charge relay system. Substrate-binding positions include 194–195 (DS), 197–198 (QG), and Ser-200. The Charge relay system role is filled by Ser-200.

The protein belongs to the peptidase S1 family. Interacts with SERPINA1. Requires Ca(2+) as cofactor. Post-translationally, autocatalytic cleavage after Lys-23 leads to beta-trypsin by releasing a terminal hexapeptide. Subsequent cleavage after Lys-148 leads to alpha-trypsin. Further cleavage after Lys-193 yields pseudotrypsin. A cleavage may also occur after Arg-122. Not sulfated on tyrosine residue(s). In terms of tissue distribution, synthesized in the acinar cells of the pancreas.

The protein resides in the secreted. The protein localises to the extracellular space. It catalyses the reaction Preferential cleavage: Arg-|-Xaa, Lys-|-Xaa.. Its activity is regulated as follows. Is inhibited by scorpion cyclotide trypsin inhibitor TopI1. This chain is Serine protease 1 (PRSS1), found in Bos taurus (Bovine).